Here is a 694-residue protein sequence, read N- to C-terminus: Polyphosphate kinase (694 aa).

Asparagine 45 is a binding site for ATP. 2 residues coordinate Mg(2+): arginine 367 and arginine 397. Histidine 427 serves as the catalytic Phosphohistidine intermediate. The ATP site is built by tyrosine 460, arginine 553, and histidine 580.

The protein belongs to the polyphosphate kinase 1 (PPK1) family. Mg(2+) serves as cofactor. In terms of processing, an intermediate of this reaction is the autophosphorylated ppk in which a phosphate is covalently linked to a histidine residue through a N-P bond.

The catalysed reaction is [phosphate](n) + ATP = [phosphate](n+1) + ADP. In terms of biological role, catalyzes the reversible transfer of the terminal phosphate of ATP to form a long-chain polyphosphate (polyP). This Campylobacter jejuni (strain RM1221) protein is Polyphosphate kinase.